Consider the following 277-residue polypeptide: Caspase-6 (277 aa).

Residues 1–5 (MTETD) constitute a propeptide that is removed on maturation. Residues 25–27 (KRR) are tri-arginine exosite. A Phosphoserine modification is found at serine 62. The active site involves histidine 104. Residues 108-125 (NHIYAYDAKIEIQTLTGL) form a 130's region region. The active site involves cysteine 146. A propeptide spanning residues 163 to 176 (HQTDKLDDNVTQVD) is cleaved from the precursor. Residue serine 240 is modified to Phosphoserine. Residues cysteine 247 and cysteine 260 are each lipidated (S-palmitoyl cysteine).

The protein belongs to the peptidase C14A family. In terms of assembly, heterotetramer that consists of two anti-parallel arranged heterodimers, each one formed by a 18 kDa (p18) and a 11 kDa (p11) subunits. Interacts with BIRC6/bruce. Interacts with RIPK3. Heterotetramer that consists of two anti-parallel arranged heterodimers, each one formed by a 18 kDa (Caspase-6 subunit p18) and a 11 kDa (Caspase-6 subunit p11) subunit. Phosphorylated by NUAK1; phosphorylation inhibits self-activation. Phosphorylation at Ser-240 by AMP-activated protein kinase (PRKAA1 or PRKAA2) inhibits autocleavage, preventing caspase activation, thereby preventing hepatocyte apoptosis. In terms of processing, palmitoylation by ZDHHC17 blocks dimerization and subsequent activation, leading to inhibit the cysteine protease activity. Post-translationally, can be cleaved and activated by different caspases, depending on the context. Cleaved and activated by caspase-8 (CASP8) and subsequently by caspase-3 (CASP3). Can also undergo autoactivation by mediating autocleavage at Asp-162 and Asp-176, while it is not able to cleave its N-terminal disordered prodomain. Cleaved and activated by CASP1, possibly in the context of inflammation.

The protein resides in the cytoplasm. It localises to the nucleus. The catalysed reaction is Strict requirement for Asp at position P1 and has a preferred cleavage sequence of Val-Glu-His-Asp-|-.. With respect to regulation, during activation, the N-terminal disordered prodomain is removed by cleavage. Concomitantly, double cleavage gives rise to a large 18-kDa and a small 11-kDa subunit. The two large and two small subunits then assemble to form the active CASP6 complex. Can be cleaved and activated by different caspases, depending on the context. Cleaved and activated by caspase-8 (CASP8) and subsequently by caspase-3 (CASP3). Can also undergo autoactivation by mediating autocleavage at Asp-162 and Asp-176, while it is not able to cleave its N-terminal disordered prodomain. Intramolecular cleavage at Asp-176 is a prerequisite for CASP6 self-activation. Cleaved and activated by CASP1 in neurons, possibly in the context of inflammation. Phosphorylation at Ser-240 inhibits autocleavage, preventing caspase activation. Cysteine protease that plays essential roles in programmed cell death, axonal degeneration, development and innate immunity. Acts as a non-canonical executioner caspase during apoptosis: localizes in the nucleus and cleaves the nuclear structural protein NUMA1 and lamin A/LMNA thereby inducing nuclear shrinkage and fragmentation. Lamin-A/LMNA cleavage is required for chromatin condensation and nuclear disassembly during apoptotic execution. Acts as a regulator of liver damage by promoting hepatocyte apoptosis: in absence of phosphorylation by AMP-activated protein kinase (AMPK), catalyzes cleavage of BID, leading to cytochrome c release, thereby participating in nonalcoholic steatohepatitis. Cleaves PARK7/DJ-1 in cells undergoing apoptosis. Involved in intrinsic apoptosis by mediating cleavage of RIPK1. Furthermore, cleaves many transcription factors such as NF-kappa-B and cAMP response element-binding protein/CREBBP. Cleaves phospholipid scramblase proteins XKR4 and XKR9. In addition to apoptosis, involved in different forms of programmed cell death. Plays an essential role in defense against viruses by acting as a central mediator of the ZBP1-mediated pyroptosis, apoptosis, and necroptosis (PANoptosis), independently of its cysteine protease activity. PANoptosis is a unique inflammatory programmed cell death, which provides a molecular scaffold that allows the interactions and activation of machinery required for inflammasome/pyroptosis, apoptosis and necroptosis. Mechanistically, interacts with RIPK3 and enhances the interaction between RIPK3 and ZBP1, leading to ZBP1-mediated inflammasome activation and cell death. Plays an essential role in axon degeneration during axon pruning which is the remodeling of axons during neurogenesis but not apoptosis. Regulates B-cell programs both during early development and after antigen stimulation. The protein is Caspase-6 of Rattus norvegicus (Rat).